A 242-amino-acid chain; its full sequence is UPF0309 protein BOV_A0853 (242 aa).

The 180-residue stretch at 30–209 (AADLIAAAAR…FADVAARLVG (180 aa)) folds into the SIS domain.

The protein belongs to the UPF0309 family.

The sequence is that of UPF0309 protein BOV_A0853 from Brucella ovis (strain ATCC 25840 / 63/290 / NCTC 10512).